Consider the following 62-residue polypeptide: Cecropin-D (62 aa).

The signal sequence occupies residues 1 to 22 (MNFTKILFFVVACVFAMRTVSA). Positions 23–24 (AP) are cleaved as a propeptide — removed by a dipeptidylpeptidase. Lys60 carries the post-translational modification Lysine amide.

It belongs to the cecropin family.

It is found in the secreted. Cecropins have lytic and antibacterial activity against several Gram-positive and Gram-negative bacteria. The chain is Cecropin-D from Hyalophora cecropia (Cecropia moth).